The sequence spans 130 residues: Small ribosomal subunit protein eS6 (130 aa).

This sequence belongs to the eukaryotic ribosomal protein eS6 family.

This chain is Small ribosomal subunit protein eS6, found in Methanosphaera stadtmanae (strain ATCC 43021 / DSM 3091 / JCM 11832 / MCB-3).